The chain runs to 323 residues: tRNA N6-adenosine threonylcarbamoyltransferase (323 aa).

Fe cation is bound by residues histidine 106, histidine 110, and tyrosine 127. Residues 127–131, aspartate 159, glycine 172, glutamate 176, and asparagine 255 each bind substrate; that span reads YVSGA. Aspartate 283 is a binding site for Fe cation.

It belongs to the KAE1 / TsaD family. Monomer. Component of the KEOPS complex that consists of Kae1, Bud32, Cgi121 and Pcc1; the whole complex dimerizes. Fe(2+) is required as a cofactor.

The protein localises to the cytoplasm. It catalyses the reaction L-threonylcarbamoyladenylate + adenosine(37) in tRNA = N(6)-L-threonylcarbamoyladenosine(37) in tRNA + AMP + H(+). Its function is as follows. Required for the formation of a threonylcarbamoyl group on adenosine at position 37 (t(6)A37) in tRNAs that read codons beginning with adenine. Is a component of the KEOPS complex that is probably involved in the transfer of the threonylcarbamoyl moiety of threonylcarbamoyl-AMP (TC-AMP) to the N6 group of A37. Kae1 likely plays a direct catalytic role in this reaction, but requires other protein(s) of the complex to fulfill this activity. In Methanocella arvoryzae (strain DSM 22066 / NBRC 105507 / MRE50), this protein is tRNA N6-adenosine threonylcarbamoyltransferase.